The chain runs to 496 residues: Germacrene A hydroxylase (496 aa).

At 1-2 (ME) the chain is on the cytoplasmic side. Residues 3 to 23 (LTLTTSLGLAVFVFILFKLLT) form a helical; Signal-anchor for type II membrane protein membrane-spanning segment. Residues 24-496 (GSKSTKNSLP…TAYKTANNSA (473 aa)) are Lumenal-facing. Cysteine 432 is a binding site for heme. Asparagine 493 is a glycosylation site (N-linked (GlcNAc...) asparagine).

It belongs to the cytochrome P450 family. Heme serves as cofactor.

It is found in the endoplasmic reticulum membrane. The enzyme catalyses (+)-(R)-germacrene A + 3 reduced [NADPH--hemoprotein reductase] + 3 O2 = germacra-1(10),4,11(13)-trien-12-oate + 3 oxidized [NADPH--hemoprotein reductase] + 4 H2O + 4 H(+). It participates in secondary metabolite biosynthesis; terpenoid biosynthesis. In terms of biological role, involved in the biosynthesis of germacrene-derived sesquiterpene lactones. Catalyzes three consecutive oxidations of germacrene A to produce germacrene A acid. Could also catalyze the three-step oxidation of non-natural substrate amorphadiene to artemisinic acid. This is Germacrene A hydroxylase from Barnadesia spinosa (Spiny barnadesia).